The primary structure comprises 415 residues: L-cysteine:1D-myo-inositol 2-amino-2-deoxy-alpha-D-glucopyranoside ligase 2 (415 aa).

Cys44 is a Zn(2+) binding site. L-cysteinyl-5'-AMP is bound by residues 44–47 (CGIT), Thr59, and 82–84 (NIT). The short motif at 46–56 (ITPYDSTHLGH) is the 'HIGH' region element. The 'ERGGDP' region signature appears at 188 to 193 (ERGGDP). Trp228 is an L-cysteinyl-5'-AMP binding site. A Zn(2+)-binding site is contributed by Cys232. Residue 250–252 (GSD) participates in L-cysteinyl-5'-AMP binding. Residue His257 participates in Zn(2+) binding. Ile284 serves as a coordination point for L-cysteinyl-5'-AMP. The 'KMSKS' region motif lies at 290–294 (KMSKS).

The protein belongs to the class-I aminoacyl-tRNA synthetase family. MshC subfamily. In terms of assembly, monomer. It depends on Zn(2+) as a cofactor.

The catalysed reaction is 1D-myo-inositol 2-amino-2-deoxy-alpha-D-glucopyranoside + L-cysteine + ATP = 1D-myo-inositol 2-(L-cysteinylamino)-2-deoxy-alpha-D-glucopyranoside + AMP + diphosphate + H(+). Its function is as follows. Catalyzes the ATP-dependent condensation of GlcN-Ins and L-cysteine to form L-Cys-GlcN-Ins. The chain is L-cysteine:1D-myo-inositol 2-amino-2-deoxy-alpha-D-glucopyranoside ligase 2 from Corynebacterium jeikeium (strain K411).